The chain runs to 393 residues: DNA primase large subunit PriL (393 aa).

The [4Fe-4S] cluster site is built by Cys230, Cys339, Cys350, and Cys356.

It belongs to the eukaryotic-type primase large subunit family. In terms of assembly, heterodimer of a small subunit (PriS) and a large subunit (PriL). [4Fe-4S] cluster is required as a cofactor.

Functionally, regulatory subunit of DNA primase, an RNA polymerase that catalyzes the synthesis of short RNA molecules used as primers for DNA polymerase during DNA replication. Stabilizes and modulates the activity of the small subunit, increasing the rate of DNA synthesis, and conferring RNA synthesis capability. The DNA polymerase activity may enable DNA primase to also catalyze primer extension after primer synthesis. May also play a role in DNA repair. Displays gap-filling and strand-displacement activities. The polypeptide is DNA primase large subunit PriL (Pyrococcus abyssi (strain GE5 / Orsay)).